Consider the following 173-residue polypeptide: Ribulose bisphosphate carboxylase small subunit, chloroplastic 1 (173 aa).

The N-terminal 52 residues, 1-52 (MMVSTAAVARVRPAQTNMVGAFNGCRSSVAFPATRKANNDLSTLPSSGGRVS), are a transit peptide targeting the chloroplast.

This sequence belongs to the RuBisCO small chain family. In terms of assembly, heterohexadecamer of 8 large and 8 small subunits.

Its subcellular location is the plastid. The protein resides in the chloroplast. Functionally, ruBisCO catalyzes two reactions: the carboxylation of D-ribulose 1,5-bisphosphate, the primary event in carbon dioxide fixation, as well as the oxidative fragmentation of the pentose substrate. Both reactions occur simultaneously and in competition at the same active site. Although the small subunit is not catalytic it is essential for maximal activity. The polypeptide is Ribulose bisphosphate carboxylase small subunit, chloroplastic 1 (Lemna gibba (Swollen duckweed)).